We begin with the raw amino-acid sequence, 207 residues long: LexA repressor (207 aa).

Residues 28 to 48 (RAEIARHLGFKSANAAEEHLK) constitute a DNA-binding region (H-T-H motif). Residues S124 and K161 each act as for autocatalytic cleavage activity in the active site.

It belongs to the peptidase S24 family. Homodimer.

The enzyme catalyses Hydrolysis of Ala-|-Gly bond in repressor LexA.. Functionally, represses a number of genes involved in the response to DNA damage (SOS response), including recA and lexA. In the presence of single-stranded DNA, RecA interacts with LexA causing an autocatalytic cleavage which disrupts the DNA-binding part of LexA, leading to derepression of the SOS regulon and eventually DNA repair. This is LexA repressor from Pseudoalteromonas atlantica (strain T6c / ATCC BAA-1087).